A 231-amino-acid polypeptide reads, in one-letter code: MNSLIKENMRMMVVMEGSVNGYQFKCTGEGDGNPYMGTQTMRIKVVEGGPLPFAFDILATSFMYGSKTFIKHTKGIPDFFKQSFPEGFTWERVTRYEDGGVFTVMQDTSLEDGCLVYHAKVTGVNFPSNGAVMQKKTKGWEPNTEMLYPADGGLRGYSQMALNVDGGGYLSCSFETTYRSKKTVENFKMPGFHFVDHRLERLEESDKEMFVVQHEHAVAKFCDLPSKLGRL.

The segment at residues 63 to 65 (MYG) is a cross-link (2-iminomethyl-5-imidazolinone (Met-Gly)). Tyr64 bears the (E)-2,3-didehydrotyrosine mark.

Belongs to the GFP family. In terms of assembly, monomer. In terms of processing, contains a chromophore consisting of modified amino acid residues. The chromophore is formed by autocatalytic backbone condensation between Xaa-N and Gly-(N+2), oxidation of Tyr-(N+1) to didehydrotyrosine, and formation of a double bond to the alpha-amino nitrogen of residue Xaa-N. Maturation of the chromophore requires nothing other than molecular oxygen.

In terms of biological role, pigment protein. This Entacmaea quadricolor (Bubble-tip anemone) protein is Red fluorescent protein eqFP611.